A 660-amino-acid polypeptide reads, in one-letter code: Glycine betaine transporter (660 aa).

Residues 1-13 lie on the Cytoplasmic side of the membrane; that stretch reads MPSKTSSRFANIN. A helical transmembrane segment spans residues 14–34; that stretch reads PNVFVSTIMIIAIFLAIVILA. Residues 35–52 lie on the Periplasmic side of the membrane; sequence PDAFELLTQQLKNWITES. A helical transmembrane segment spans residues 53–73; it reads FSWFYVLSVAFFLIVLGYIAC. The Cytoplasmic portion of the chain corresponds to 74–93; that stretch reads SSSGKIKLGPDHSQPDYSNS. A helical transmembrane segment spans residues 94-114; that stretch reads SWFAMLFTAGMGIGLMFFGIA. Over 115-139 the chain is Periplasmic; sequence EPIMHYVSPPSGEPETILAAQQSMR. The chain crosses the membrane as a helical span at residues 140 to 160; that stretch reads VTFFHWGLHAWGIYAIVALSL. Topologically, residues 161-195 are cytoplasmic; it reads SYFAYRHDLPLKIRSSLYPLIGKKIYGPMGDAVDT. The chain crosses the membrane as a helical span at residues 196 to 216; the sequence is FATIGTIFGVATTLGFGVTQI. Topologically, residues 217–230 are periplasmic; it reads SSGLNYLFGFEPTS. Residues 231–251 traverse the membrane as a helical segment; that stretch reads FSKVVLIIIVSAMAALSVGLG. At 252-263 the chain is on the cytoplasmic side; that stretch reads LDKGVKRLAELN. Residues 264 to 284 form a helical membrane-spanning segment; the sequence is LVLAVTLLAFVFFTSATVYLL. Residues 285–316 are Periplasmic-facing; sequence QTTIQNTGQYISNLFEMTFNLYAYQPNGWIGG. The helical transmembrane segment at 317 to 337 threads the bilayer; the sequence is WTIMYWAWWISWSPFVGMFIA. The Cytoplasmic portion of the chain corresponds to 338-347; that stretch reads RVSRGRTIRE. A helical transmembrane segment spans residues 348–368; it reads FIIGVMLIPTGFTLIWMGFMG. Residues 369–401 lie on the Periplasmic side of the membrane; that stretch reads NAGLYSILHDGNLSLLNAVQRDSSVALFEFLHS. Residues 402–422 form a helical membrane-spanning segment; that stretch reads LPFSGVMSLLATVLVVLFFVT. At 423–446 the chain is on the cytoplasmic side; sequence SADSGALVVDYLTAKSEDSPVWQR. A helical transmembrane segment spans residues 447 to 467; that stretch reads LFWIVVMAGLAIILLLAGGLT. Residues 468-471 are Periplasmic-facing; that stretch reads ALQS. Residues 472 to 492 traverse the membrane as a helical segment; it reads ATIMSALPFTFIMLLICWGLI. Topologically, residues 493–660 are cytoplasmic; that stretch reads KALRIDSTKM…LSVMRAQTGN (168 aa).

It belongs to the BCCT transporter (TC 2.A.15) family.

The protein localises to the cell inner membrane. With respect to regulation, uptake is activated by NaCl, KCl or mannose gradients across the cell membrane. Inhibited by the protonophore 3,3',4',5-tetrachlorosalicylanilide (TCS). Energy-dependent uptake of glycine betaine in response to high salinity. In Acinetobacter baylyi (strain ATCC 33305 / BD413 / ADP1), this protein is Glycine betaine transporter.